Reading from the N-terminus, the 254-residue chain is Ubiquinone biosynthesis O-methyltransferase (254 aa).

S-adenosyl-L-methionine is bound by residues arginine 47, glycine 78, aspartate 99, and methionine 141.

This sequence belongs to the methyltransferase superfamily. UbiG/COQ3 family.

The enzyme catalyses a 3-demethylubiquinol + S-adenosyl-L-methionine = a ubiquinol + S-adenosyl-L-homocysteine + H(+). It carries out the reaction a 3-(all-trans-polyprenyl)benzene-1,2-diol + S-adenosyl-L-methionine = a 2-methoxy-6-(all-trans-polyprenyl)phenol + S-adenosyl-L-homocysteine + H(+). It functions in the pathway cofactor biosynthesis; ubiquinone biosynthesis. Functionally, O-methyltransferase that catalyzes the 2 O-methylation steps in the ubiquinone biosynthetic pathway. The chain is Ubiquinone biosynthesis O-methyltransferase from Rhodopseudomonas palustris (strain BisB18).